We begin with the raw amino-acid sequence, 227 residues long: YEATS domain-containing protein 4 (227 aa).

One can recognise a YEATS domain in the interval 15–158 (RVKGVTIVKP…AMMQQLLTTS (144 aa)). Residue Lys-37 forms a Glycyl lysine isopeptide (Lys-Gly) (interchain with G-Cter in SUMO2) linkage. Positions 93-97 (WGEFE) are diacetylated histone H3 binding. Positions 163-227 (LGAYKHETEF…LEEDDQTKDI (65 aa)) are interaction with MLLT10. Positions 168–227 (HETEFAELEVKTREKLEAAKKKTSFEIAELKERLKASRETINCLKNEIRKLEEDDQTKDI) are interaction with TACC1. Positions 178–226 (KTREKLEAAKKKTSFEIAELKERLKASRETINCLKNEIRKLEEDDQTKD) form a coiled coil.

As to quaternary structure, component of numerous complexes with chromatin remodeling and histone acetyltransferase activity. Component of the NuA4 histone acetyltransferase complex which contains the catalytic subunit KAT5/TIP60 and the subunits EP400, TRRAP/PAF400, BRD8/SMAP, EPC1, DMAP1/DNMAP1, RUVBL1/TIP49, RUVBL2, ING3, actin, ACTL6A/BAF53A, MORF4L1/MRG15, MORF4L2/MRGX, MRGBP, YEATS4/GAS41, VPS72/YL1 and MEAF6. The NuA4 complex interacts with MYC and the adenovirus E1A protein. Component of a NuA4-related complex which contains EP400, TRRAP/PAF400, SRCAP, BRD8/SMAP, EPC1, DMAP1/DNMAP1, RUVBL1/TIP49, RUVBL2, actin, ACTL6A/BAF53A, VPS72 and YEATS4/GAS41. Interacts with MLLT10/AF10. Also interacts with the SWI/SNF component SMARCB1/BAF47, TACC1 and TACC2, and the nuclear matrix protein NUMA1.

It localises to the nucleus. In terms of biological role, chromatin reader component of the NuA4 histone acetyltransferase (HAT) complex, a complex involved in transcriptional activation of select genes principally by acetylation of nucleosomal histones H4 and H2A. Specifically recognizes and binds acylated histone H3, with a preference for histone H3 diacetylated at 'Lys-18' and 'Lys-27' (H3K18ac and H3K27ac) or histone H3 diacetylated at 'Lys-14' and 'Lys-27' (H3K14ac and H3K27ac). Also able to recognize and bind crotonylated histone H3. May also recognize and bind histone H3 succinylated at 'Lys-122' (H3K122succ); additional evidences are however required to confirm this result in vivo. Plays a key role in histone variant H2AZ1/H2A.Z deposition into specific chromatin regions: recognizes and binds H3K14ac and H3K27ac on the promoters of actively transcribed genes and recruits NuA4-related complex to deposit H2AZ1/H2A.Z. H2AZ1/H2A.Z deposition is required for maintenance of embryonic stem cell. In Mus musculus (Mouse), this protein is YEATS domain-containing protein 4.